The chain runs to 50 residues: Thrombin-like enzyme BpirSP27 (50 aa).

One can recognise a Peptidase S1 domain in the interval 1 to 50; it reads VVGGDECNINEHRSLVAIFNSTGFFCSGILLNQEWVLTASHCDSTNFQMK. The N-linked (GlcNAc...) asparagine glycan is linked to asparagine 20. Cysteine 26 and cysteine 42 form a disulfide bridge. The active-site Charge relay system is histidine 41.

Belongs to the peptidase S1 family. Snake venom subfamily. As to quaternary structure, monomer. Post-translationally, N-glycosylated. Expressed by the venom gland.

It localises to the secreted. Its activity is regulated as follows. Inhibited by serine protease inhibitors PMSF, benzamidine, leupeptin and aprotinin, as well as by copper (Cu2+) and manganese (Mn2+) ions. Not inhibited by metalloprotease inhibitors EDTA, EGTA and 1,10-phenanthroline, as well as by barium (Ba2+) and calcium ion (Ca2+). In terms of biological role, snake venom serine protease that interferes with the hemostatic system of the prey. It preferentially degrades the Bbeta chain (FGB) of fibrinogen, with minor effects on the Aalpha chain (FGA). It presents a lower ability to degrade fibrin clots than BpirSP41. It hydrolyzes chromogenic substrates S-2238 (used for testing thrombin activity), S-2222 (factor Xa), S-2266 (glandular kallikrein and factor XIa), S-2302 (plasma kallikrein, factor XIa and XIIa), and S-2251 (plasmin). It shows a decrease in the clotting time of human plasma in the presence of increasing doses of the enzyme. Its minimum coagulant dose (MCD) is 3.5 ug. It also promotes platelet aggregation in a concentration-dependent manner in the presence or absence of calcium. It also shows 20% inhibition of the hemolytic activity promoted by the complement pathways and possess only a minor role in the induction of edema and pain in rat. The chain is Thrombin-like enzyme BpirSP27 from Bothrops pirajai (Piraja's lancehead).